Reading from the N-terminus, the 65-residue chain is Small ribosomal subunit protein eS31 (65 aa).

Residues Cys-36, Cys-39, Cys-55, and Cys-58 each coordinate Zn(2+). A C4-type zinc finger spans residues 36–58 (CPKCGSVMAFHKEPVPRWHCGKC).

It belongs to the eukaryotic ribosomal protein eS31 family. In terms of assembly, part of the 30S ribosomal subunit. The cofactor is Zn(2+).

The protein is Small ribosomal subunit protein eS31 of Pyrobaculum aerophilum (strain ATCC 51768 / DSM 7523 / JCM 9630 / CIP 104966 / NBRC 100827 / IM2).